We begin with the raw amino-acid sequence, 438 residues long: UDP-N-acetylmuramoylalanine--D-glutamate ligase (438 aa).

Glycine 112–threonine 118 contacts ATP.

The protein belongs to the MurCDEF family.

The protein resides in the cytoplasm. It catalyses the reaction UDP-N-acetyl-alpha-D-muramoyl-L-alanine + D-glutamate + ATP = UDP-N-acetyl-alpha-D-muramoyl-L-alanyl-D-glutamate + ADP + phosphate + H(+). Its pathway is cell wall biogenesis; peptidoglycan biosynthesis. Its function is as follows. Cell wall formation. Catalyzes the addition of glutamate to the nucleotide precursor UDP-N-acetylmuramoyl-L-alanine (UMA). This chain is UDP-N-acetylmuramoylalanine--D-glutamate ligase, found in Salmonella typhimurium (strain LT2 / SGSC1412 / ATCC 700720).